Consider the following 445-residue polypeptide: 3-dehydroquinate synthase, chloroplastic (445 aa).

The transit peptide at 1–68 directs the protein to the chloroplast; that stretch reads MAAFSLSAKQ…RASASSTAPV (68 aa). Residues Asn-122, 153 to 155, Lys-158, 186 to 191, 211 to 212, Lys-224, Lys-233, and 251 to 254 contribute to the NAD(+) site; these read DGE, GGVIGD, TT, and TLNT. Glu-266 contributes to the a divalent metal cation binding site. Lys-308 serves as a coordination point for NAD(+). Residues His-329 and His-346 each coordinate a divalent metal cation.

This sequence belongs to the sugar phosphate cyclases superfamily. Dehydroquinate synthase family. As to quaternary structure, homodimer. A divalent metal cation serves as cofactor. The cofactor is NAD(+).

It is found in the plastid. It localises to the chloroplast. It catalyses the reaction 7-phospho-2-dehydro-3-deoxy-D-arabino-heptonate = 3-dehydroquinate + phosphate. It functions in the pathway metabolic intermediate biosynthesis; chorismate biosynthesis; chorismate from D-erythrose 4-phosphate and phosphoenolpyruvate: step 2/7. Catalyzes the second step in the shikimate pathway. The sequence is that of 3-dehydroquinate synthase, chloroplastic (DHQS) from Actinidia chinensis var. chinensis (Chinese soft-hair kiwi).